The sequence spans 208 residues: MNRMFDLVLGTGNAKKLVELRMMLPEETIALTALSEIENAIDVVEDGETFSANAAKKATEQAKHLERWVLAEDSGLSVDALKGAPGVYSARYAGTHGDDEANNEKLLRELTDVPMDRRGAQFNCHLCLSDPDGNVRLAESGICRGRIATERSGGAGFGYDPLFVIPEYHKTFGELNLTVKRALSHRSRALRLFIPQLLRLVQSNSTSA.

A substrate-binding site is contributed by 11–16 (TGNAKK). Asp-73 (proton acceptor) is an active-site residue. Asp-73 lines the Mg(2+) pocket. Residues Ser-74, 157 to 160 (FGYD), Lys-180, and 185 to 186 (HR) contribute to the substrate site.

This sequence belongs to the HAM1 NTPase family. In terms of assembly, homodimer. Mg(2+) serves as cofactor.

The enzyme catalyses XTP + H2O = XMP + diphosphate + H(+). The catalysed reaction is dITP + H2O = dIMP + diphosphate + H(+). It catalyses the reaction ITP + H2O = IMP + diphosphate + H(+). Its function is as follows. Pyrophosphatase that catalyzes the hydrolysis of nucleoside triphosphates to their monophosphate derivatives, with a high preference for the non-canonical purine nucleotides XTP (xanthosine triphosphate), dITP (deoxyinosine triphosphate) and ITP. Seems to function as a house-cleaning enzyme that removes non-canonical purine nucleotides from the nucleotide pool, thus preventing their incorporation into DNA/RNA and avoiding chromosomal lesions. This Rhodopirellula baltica (strain DSM 10527 / NCIMB 13988 / SH1) protein is dITP/XTP pyrophosphatase.